Reading from the N-terminus, the 210-residue chain is Proteasome subunit beta (210 aa).

Residues 1–10 constitute a propeptide, removed in mature form; by autocatalysis; the sequence is MKELDQLTKG. Threonine 11 functions as the Nucleophile in the catalytic mechanism.

The protein belongs to the peptidase T1B family. The 20S proteasome core is composed of 14 alpha and 14 beta subunits that assemble into four stacked heptameric rings, resulting in a barrel-shaped structure. The two inner rings, each composed of seven catalytic beta subunits, are sandwiched by two outer rings, each composed of seven alpha subunits. The catalytic chamber with the active sites is on the inside of the barrel. Has a gated structure, the ends of the cylinder being occluded by the N-termini of the alpha-subunits. Is capped at one or both ends by the proteasome regulatory ATPase, PAN.

The protein localises to the cytoplasm. The enzyme catalyses Cleavage of peptide bonds with very broad specificity.. Its activity is regulated as follows. The formation of the proteasomal ATPase PAN-20S proteasome complex, via the docking of the C-termini of PAN into the intersubunit pockets in the alpha-rings, triggers opening of the gate for substrate entry. Interconversion between the open-gate and close-gate conformations leads to a dynamic regulation of the 20S proteasome proteolysis activity. In terms of biological role, component of the proteasome core, a large protease complex with broad specificity involved in protein degradation. The polypeptide is Proteasome subunit beta (Methanopyrus kandleri (strain AV19 / DSM 6324 / JCM 9639 / NBRC 100938)).